We begin with the raw amino-acid sequence, 585 residues long: MNLFTDFEARIKTALEQIDLVREKRSELDFGRITVEPPRDASHGDVATNAAMVLAKPLGSNPRALADVIIAKLKEDADVADVSVAGPGFINIRLSVGYWQRLLASMINSGTDYGRSTLGAGRKVNVEYVSANPTGPMHVGHCRGAVVGDALANLLAFAGYGVEKEYYINDAGSQIDVLARSVFLRYREALGERIGEIPSGLYPGDYLVPVGQSLAADYGVRLHNMPEEQWMPIVKDRTISAMMVMIREDLAALNVHHDIFFSERTLHANGAAAIRTAINDLTFKGYVYKGTLPPPKGQLPEDWEDREQTLFRSTEVGDDMDRPLIKSDGSYTYFAADVAYFKNKFDRGFDEMIYVLGADHGGYVKRLEAVARGVSNGKAKLTVLLCQLVKLYRNGEPVKMSKRSGDFVTLRDVVEEVGRDSVRFMMLYRKNSEPLDFDFAKVTEQSKDNPVFYVQYAHARCMSVFRQAREAFPGLEVSAEDLAKAVAGIGDPAELQLVAKLAEFPRVVEAAAQSQEPHRIAFYLYDLASSFHAHWNKGKDQTELRFVNDKNRESSIARLGLVYAVASVLKSGLAITGTAAPDEMR.

A 'HIGH' region motif is present at residues 131 to 141 (ANPTGPMHVGH).

This sequence belongs to the class-I aminoacyl-tRNA synthetase family. As to quaternary structure, monomer.

Its subcellular location is the cytoplasm. It carries out the reaction tRNA(Arg) + L-arginine + ATP = L-arginyl-tRNA(Arg) + AMP + diphosphate. The chain is Arginine--tRNA ligase from Rhizobium etli (strain CIAT 652).